Here is a 122-residue protein sequence, read N- to C-terminus: Large ribosomal subunit protein uL14 (122 aa).

Belongs to the universal ribosomal protein uL14 family. In terms of assembly, part of the 50S ribosomal subunit. Forms a cluster with proteins L3 and L19. In the 70S ribosome, L14 and L19 interact and together make contacts with the 16S rRNA in bridges B5 and B8.

Functionally, binds to 23S rRNA. Forms part of two intersubunit bridges in the 70S ribosome. This chain is Large ribosomal subunit protein uL14, found in Geobacillus thermodenitrificans (strain NG80-2).